We begin with the raw amino-acid sequence, 471 residues long: ATP synthase subunit beta (471 aa).

158-165 (GGAGCGKT) lines the ATP pocket.

This sequence belongs to the ATPase alpha/beta chains family. In terms of assembly, F-type ATPases have 2 components, CF(1) - the catalytic core - and CF(0) - the membrane proton channel. CF(1) has five subunits: alpha(3), beta(3), gamma(1), delta(1), epsilon(1). CF(0) has three main subunits: a(1), b(2) and c(9-12). The alpha and beta chains form an alternating ring which encloses part of the gamma chain. CF(1) is attached to CF(0) by a central stalk formed by the gamma and epsilon chains, while a peripheral stalk is formed by the delta and b chains.

The protein resides in the cell inner membrane. It catalyses the reaction ATP + H2O + 4 H(+)(in) = ADP + phosphate + 5 H(+)(out). Functionally, produces ATP from ADP in the presence of a proton gradient across the membrane. The catalytic sites are hosted primarily by the beta subunits. In Desulfotalea psychrophila (strain LSv54 / DSM 12343), this protein is ATP synthase subunit beta.